The chain runs to 410 residues: F-box protein At3g19890 (410 aa).

Residues 2–49 form the F-box domain; it reads TMISDLSKDLVEEILSKAPITSLGAVRSTHKQWNALSKGRLLYKAEAK. The segment at 386 to 410 is disordered; it reads EDKCKSIKMVDTKRQRKKRKRKSKR. Positions 387 to 398 are enriched in basic and acidic residues; sequence DKCKSIKMVDTK. Residues 399–410 are compositionally biased toward basic residues; the sequence is RQRKKRKRKSKR.

This chain is F-box protein At3g19890, found in Arabidopsis thaliana (Mouse-ear cress).